The sequence spans 597 residues: uncharacterized protein (597 aa).

The region spanning 48-198 (LHPYNPYSSL…DSILSLTKET (151 aa)) is the Helicase ATP-binding domain. 61-68 (YDVGLGKT) is a binding site for ATP. A DEVH box motif is present at residues 146-149 (DEVH). A Helicase C-terminal domain is found at 275-467 (KINAFINSIK…DIPKIDNEMV (193 aa)).

It belongs to the helicase family.

Its function is as follows. The presence of the two linear plasmids, termed pGKL1 and pGKL2, in strains of Kluyveromyces lactis confers the killer phenotype to the host cell, by promoting the secretion of a toxin able to inhibit the growth of sensitive strains. This is an uncharacterized protein from Kluyveromyces lactis (strain ATCC 8585 / CBS 2359 / DSM 70799 / NBRC 1267 / NRRL Y-1140 / WM37) (Yeast).